The chain runs to 1409 residues: DNA-directed RNA polymerase subunit beta' (1409 aa).

Cysteine 70, cysteine 72, cysteine 85, and cysteine 88 together coordinate Zn(2+). Residues aspartate 461, aspartate 463, and aspartate 465 each coordinate Mg(2+). Residues cysteine 820, cysteine 894, cysteine 901, and cysteine 904 each coordinate Zn(2+).

It belongs to the RNA polymerase beta' chain family. In terms of assembly, the RNAP catalytic core consists of 2 alpha, 1 beta, 1 beta' and 1 omega subunit. When a sigma factor is associated with the core the holoenzyme is formed, which can initiate transcription. Mg(2+) is required as a cofactor. The cofactor is Zn(2+).

The catalysed reaction is RNA(n) + a ribonucleoside 5'-triphosphate = RNA(n+1) + diphosphate. In terms of biological role, DNA-dependent RNA polymerase catalyzes the transcription of DNA into RNA using the four ribonucleoside triphosphates as substrates. In Ralstonia nicotianae (strain ATCC BAA-1114 / GMI1000) (Ralstonia solanacearum), this protein is DNA-directed RNA polymerase subunit beta'.